We begin with the raw amino-acid sequence, 611 residues long: Endo-1,4-beta-xylanase A (611 aa).

A signal peptide spans 1–26 (MRTAMAKSLGAAAFLGAALFAHTLAA). A CBM2 domain is found at 27 to 128 (QTATCSYNIT…SVGGSICSGS (102 aa)). 3 cysteine pairs are disulfide-bonded: C31-C125, C184-C215, and C194-C209. Positions 183–212 (QCNWYGTLYPLCVTTTNGWGWEDQRSCIAR) constitute a CBM10 domain. The region spanning 281 to 607 (SGGNADIFTS…KPAYQGVVEA (327 aa)) is the GH10 domain. E391 serves as the catalytic Proton donor. The active-site Nucleophile is the E510.

Belongs to the glycosyl hydrolase 10 (cellulase F) family.

The catalysed reaction is Endohydrolysis of (1-&gt;4)-beta-D-xylosidic linkages in xylans.. It participates in glycan degradation; xylan degradation. This chain is Endo-1,4-beta-xylanase A (xynA), found in Cellvibrio japonicus (strain Ueda107) (Pseudomonas fluorescens subsp. cellulosa).